The primary structure comprises 170 residues: MAAVPKRPSQQQELFWKTKTLEQMSAAEWESLCDGCARCCLEKLECEDTGRIYFTHIGCKMLDAEACGCKDYANRSKKVPDCVRLTPANVRTLSWLPSSCAYRLVAEGRDLYWWHPLVSGDPDTVHEAGVSVRGRVEGLEGEVSDAELEDHIVSWPTLLPKRAKLKKRPA.

This sequence belongs to the UPF0260 family.

This is UPF0260 protein RPE_1881 from Rhodopseudomonas palustris (strain BisA53).